The chain runs to 297 residues: Transmembrane protein 169 (297 aa).

The interval 1–88 is disordered; the sequence is MEESAPVESQ…EGEDFLDYPG (88 aa). Over 1 to 159 the chain is Extracellular; sequence MEESAPVESQ…CQVGADQGPH (159 aa). Positions 22–31 are enriched in low complexity; that stretch reads RRAVAAVLAL. Composition is skewed to acidic residues over residues 61–70 and 78–88; these read KTDEEPEESE and EEGEDFLDYPG. The helical transmembrane segment at 160–180 threads the bilayer; it reads VVLWTLVCLPVVFVLSFVVSF. Residues 181 to 210 lie on the Cytoplasmic side of the membrane; it reads YYGTITWYNIFLVYNEERTFWHKISCCPCL. A helical membrane pass occupies residues 211 to 231; it reads ILFYPVLIMTMASSLGLYAAV. Topologically, residues 232 to 297 are extracellular; that stretch reads AQLSWSWAAW…PIQEVETSTV (66 aa).

It localises to the membrane. This Mus musculus (Mouse) protein is Transmembrane protein 169 (Tmem169).